Consider the following 364-residue polypeptide: Probable dual-specificity RNA methyltransferase RlmN (364 aa).

The Proton acceptor role is filled by Glu-109. A Radical SAM core domain is found at 123 to 351; sequence PKARLTVCVS…VSVRYSRGLE (229 aa). Cys-130 and Cys-356 form a disulfide bridge. Residues Cys-137, Cys-141, and Cys-144 each contribute to the [4Fe-4S] cluster site. S-adenosyl-L-methionine is bound by residues 184–185, Ser-214, 237–239, and Asn-313; these read GE and SLH. Cys-356 (S-methylcysteine intermediate) is an active-site residue.

The protein belongs to the radical SAM superfamily. RlmN family. It depends on [4Fe-4S] cluster as a cofactor.

It localises to the cytoplasm. It carries out the reaction adenosine(2503) in 23S rRNA + 2 reduced [2Fe-2S]-[ferredoxin] + 2 S-adenosyl-L-methionine = 2-methyladenosine(2503) in 23S rRNA + 5'-deoxyadenosine + L-methionine + 2 oxidized [2Fe-2S]-[ferredoxin] + S-adenosyl-L-homocysteine. The enzyme catalyses adenosine(37) in tRNA + 2 reduced [2Fe-2S]-[ferredoxin] + 2 S-adenosyl-L-methionine = 2-methyladenosine(37) in tRNA + 5'-deoxyadenosine + L-methionine + 2 oxidized [2Fe-2S]-[ferredoxin] + S-adenosyl-L-homocysteine. Specifically methylates position 2 of adenine 2503 in 23S rRNA and position 2 of adenine 37 in tRNAs. This Nostoc punctiforme (strain ATCC 29133 / PCC 73102) protein is Probable dual-specificity RNA methyltransferase RlmN.